Consider the following 456-residue polypeptide: MFS-type transporter ppzB (456 aa).

Helical transmembrane passes span 1–21 (MGLF…PFIM), 38–58 (GFLA…GWAA), 72–92 (VFLF…LLVV), 125–145 (IGTI…LGGV), and 154–174 (AVFA…GLVI). A disordered region spans residues 206–225 (EAQERTHEGTPLLPQDDDDD). The next 6 helical transmembrane spans lie at 255 to 275 (LAML…ATVP), 284 to 304 (FSSL…FALG), 318 to 338 (AAAT…GLPE), 348 to 368 (VALF…VTSP), 398 to 418 (FGFS…LGGV), and 427 to 447 (VMGA…FLFV).

This sequence belongs to the major facilitator superfamily. TCR/Tet family.

The protein localises to the membrane. Functionally, MFS-type transporter; part of the gene cluster that mediates the biosynthesis of pyrrolopyrazines, secondary metabolites showing insecticidal activity. Probably involved in the secretion of peramine and other pyrrolopyrazines. This Metarhizium majus (strain ARSEF 297) protein is MFS-type transporter ppzB (ppzB).